The primary structure comprises 891 residues: Protein translocase subunit SecA (891 aa).

ATP is bound by residues Q83, 101–105, and D489; that span reads GEGKT.

Belongs to the SecA family.

The protein localises to the plastid. Its subcellular location is the chloroplast stroma. It is found in the chloroplast thylakoid membrane. The catalysed reaction is ATP + H2O + cellular proteinSide 1 = ADP + phosphate + cellular proteinSide 2.. In terms of biological role, has a central role in coupling the hydrolysis of ATP to the transfer of proteins across the thylakoid membrane. The chain is Protein translocase subunit SecA from Diacronema lutheri (Unicellular marine alga).